A 553-amino-acid chain; its full sequence is MMFPAVAAPPRRLPGERLQRSQNPVETSWLSFRILATRGPCVTSTFLFLTVAFLGLSWVSVAVAAHAEHPEDSATNFLFSFAENSLANREPPEDSAARPSSRSGGAERRRLDSLIPGFLKRRRIFKQLRPVDEFQLREFQEASSKVKAQFFSAGHSKVTFVDRPSAALLSFLHLEEEDVPYGVVIKAIPYDAFDFYESVAEPYIHRMFDDPRKFPYVVPVLAALRSTSKRVLYLVLPLYRELPETVDEEARSLDFVLLLAEMAMAVCQLHERNLAHRDLKEDNFLVSPEGHIVVSDLATLDITDNKSFLIGTSGYMPPETRSSYLLRKGYKRSRYGEKTDVYSLGVAFRHLAFMLEGLGVQVPHRTQLAKLIKKMTSPDPEKRPLIGEVMEDPFFASVDFRLVRQRAGKHPFKKLPGADLLAERQRARLEAREKADAAAKAADNAEVPAAKSPAGKTGGAGTLSGDRDRAGSGEKPAERAEEEKGRGRGAQTHEGNHDRTDDAGREELREGPGDQKPSGEENREGGQPPGQREEQREGTGLEEGFNKEDAQES.

Disordered stretches follow at residues 1–20 (MMFPAVAAPPRRLPGERLQR) and 88–107 (NREPPEDSAARPSSRSGGAE). The N-terminal stretch at 1-64 (MMFPAVAAPP…GLSWVSVAVA (64 aa)) is a signal peptide. The Protein kinase domain occupies 125 to 395 (FKQLRPVDEF…IGEVMEDPFF (271 aa)). Lys-186 lines the ATP pocket. Asp-278 acts as the Proton acceptor in catalysis. Residues 432–553 (REKADAAAKA…GFNKEDAQES (122 aa)) are disordered. The segment covering 438–451 (AAKAADNAEVPAAK) has biased composition (low complexity). 3 stretches are compositionally biased toward basic and acidic residues: residues 465–486 (GDRDRAGSGEKPAERAEEEKGR), 494–524 (EGNHDRTDDAGREELREGPGDQKPSGEENRE), and 531–553 (QREEQREGTGLEEGFNKEDAQES).

It belongs to the protein kinase superfamily. STE Ser/Thr protein kinase family. WNG subfamily. It depends on Mg(2+) as a cofactor.

The protein resides in the cytoplasmic granule. Its subcellular location is the secreted. It localises to the parasitophorous vacuole lumen. It carries out the reaction L-seryl-[protein] + ATP = O-phospho-L-seryl-[protein] + ADP + H(+). The catalysed reaction is L-threonyl-[protein] + ATP = O-phospho-L-threonyl-[protein] + ADP + H(+). In terms of biological role, probable serine/threonine-protein kinase. The polypeptide is Serine/threonine-protein kinase WNG2 (Toxoplasma gondii).